The primary structure comprises 436 residues: Chromosomal replication initiator protein DnaA (436 aa).

The tract at residues 1–69 is domain I, interacts with DnaA modulators; it reads MSIFTKIKKS…SELYEKETGI (69 aa). Positions 69 to 97 are domain II; sequence IKPKIDIVTKEISHRPLTIEEIIEPTTPS. Residues 98–311 form a domain III, AAA+ region region; it reads VLIPEYTFES…GMITKINAMS (214 aa). 4 residues coordinate ATP: Gly-142, Gly-144, Lys-145, and Thr-146. The interval 312 to 436 is domain IV, binds dsDNA; that stretch reads KILGISEITL…KNKIQIKKSE (125 aa).

This sequence belongs to the DnaA family. Oligomerizes as a right-handed, spiral filament on DNA at oriC.

The protein resides in the cytoplasm. Its function is as follows. Plays an essential role in the initiation and regulation of chromosomal replication. ATP-DnaA binds to the origin of replication (oriC) to initiate formation of the DNA replication initiation complex once per cell cycle. Binds the DnaA box (a 9 base pair repeat at the origin) and separates the double-stranded (ds)DNA. Forms a right-handed helical filament on oriC DNA; dsDNA binds to the exterior of the filament while single-stranded (ss)DNA is stabiized in the filament's interior. The ATP-DnaA-oriC complex binds and stabilizes one strand of the AT-rich DNA unwinding element (DUE), permitting loading of DNA polymerase. After initiation quickly degrades to an ADP-DnaA complex that is not apt for DNA replication. Binds acidic phospholipids. This Nautilia profundicola (strain ATCC BAA-1463 / DSM 18972 / AmH) protein is Chromosomal replication initiator protein DnaA.